Reading from the N-terminus, the 755-residue chain is Actin-related protein 5 (755 aa).

At Ser7 the chain carries Phosphoserine. Lys12 participates in a covalent cross-link: Glycyl lysine isopeptide (Lys-Gly) (interchain with G-Cter in ubiquitin). Thr24 is subject to Phosphothreonine. Position 383 is a phosphoserine (Ser383). The segment at 418 to 444 (QRFLKASQDARQKAKEEKERVAKEEEE) is disordered. The span at 425–444 (QDARQKAKEEKERVAKEEEE) shows a compositional bias: basic and acidic residues.

The protein belongs to the actin family. In terms of assembly, component of the chromatin-remodeling INO80 complex, at least composed of ARP4, ARP5, ARP8, RVB1, RVB2, TAF14, NHP10, IES1, IES3, IES4, IES6, ACT1, IES2, IES5 and INO80.

The protein resides in the nucleus. Functionally, probably involved in transcription regulation via its interaction with the INO80 complex, a chromatin remodeling complex. The sequence is that of Actin-related protein 5 (ARP5) from Saccharomyces cerevisiae (strain ATCC 204508 / S288c) (Baker's yeast).